A 542-amino-acid chain; its full sequence is Chaperonin GroEL (542 aa).

Residues 29–32 (TLGP), 86–90 (DGTTT), Gly-413, 476–478 (NAA), and Asp-492 contribute to the ATP site.

The protein belongs to the chaperonin (HSP60) family. As to quaternary structure, forms a cylinder of 14 subunits composed of two heptameric rings stacked back-to-back. Interacts with the co-chaperonin GroES.

The protein resides in the cytoplasm. The catalysed reaction is ATP + H2O + a folded polypeptide = ADP + phosphate + an unfolded polypeptide.. Functionally, together with its co-chaperonin GroES, plays an essential role in assisting protein folding. The GroEL-GroES system forms a nano-cage that allows encapsulation of the non-native substrate proteins and provides a physical environment optimized to promote and accelerate protein folding. The polypeptide is Chaperonin GroEL (Streptococcus mutans serotype c (strain ATCC 700610 / UA159)).